The primary structure comprises 115 residues: Large ribosomal subunit protein bL20 (115 aa).

Belongs to the bacterial ribosomal protein bL20 family.

Its function is as follows. Binds directly to 23S ribosomal RNA and is necessary for the in vitro assembly process of the 50S ribosomal subunit. It is not involved in the protein synthesizing functions of that subunit. This is Large ribosomal subunit protein bL20 from Cytophaga hutchinsonii (strain ATCC 33406 / DSM 1761 / CIP 103989 / NBRC 15051 / NCIMB 9469 / D465).